The primary structure comprises 654 residues: Acetyl-coenzyme A synthetase (654 aa).

CoA is bound by residues 191-194 and Thr315; that span reads RRGQ. ATP contacts are provided by residues 391 to 393, 415 to 420, Asp506, and Arg521; these read GEP and DTWWQT. Residue Ser529 participates in CoA binding. Residue Arg532 participates in ATP binding. Residues Val543, His545, and Val548 each coordinate Mg(2+). An N6-acetyllysine modification is found at Lys615.

It belongs to the ATP-dependent AMP-binding enzyme family. Mg(2+) serves as cofactor. Post-translationally, acetylated. Deacetylation by the SIR2-homolog deacetylase activates the enzyme.

It carries out the reaction acetate + ATP + CoA = acetyl-CoA + AMP + diphosphate. Catalyzes the conversion of acetate into acetyl-CoA (AcCoA), an essential intermediate at the junction of anabolic and catabolic pathways. AcsA undergoes a two-step reaction. In the first half reaction, AcsA combines acetate with ATP to form acetyl-adenylate (AcAMP) intermediate. In the second half reaction, it can then transfer the acetyl group from AcAMP to the sulfhydryl group of CoA, forming the product AcCoA. The chain is Acetyl-coenzyme A synthetase from Gemmatimonas aurantiaca (strain DSM 14586 / JCM 11422 / NBRC 100505 / T-27).